The primary structure comprises 160 residues: Anaerobic nitrite reductase Glb1-1 (160 aa).

The Globin domain maps to glycine 8 to lysine 157. Positions glutamate 41–serine 45 match the Homodimerization motif. Positions 51, 65, 69, 99, and 104 each coordinate heme b. The Homodimerization signature appears at aspartate 111–glutamate 123.

Belongs to the plant globin family. Homodimer. Requires heme b as cofactor.

The enzyme catalyses Fe(III)-heme b-[protein] + nitric oxide + H2O = Fe(II)-heme b-[protein] + nitrite + 2 H(+). Functionally, phytoglobin that reduces nitrite to nitric oxide (NO) under anoxic conditions (e.g. during flooding or in waterlogged soil) and upon root nodulation. Required for general plant development and during nodulation, especially for the onset of symbiosis. Monitors nitric oxide (NO) levels during early phase of the nitrogen-fixing symbiosis and buffers oxygen in functioning nodules. May not function as an oxygen storage or transport protein. Has an unusually high affinity for O(2) through a hexacoordinate heme iron because of a very low dissociation constant. In Medicago truncatula (Barrel medic), this protein is Anaerobic nitrite reductase Glb1-1.